The following is a 1763-amino-acid chain: Non-reducing polyketide synthase PKS19 (1763 aa).

The N-terminal acylcarrier protein transacylase domain (SAT) stretch occupies residues 20–261 (GDQRNLFRKL…PMKKVQGMWH (242 aa)). The Ketosynthase family 3 (KS3) domain occupies 390-822 (SSKIAVVGMA…GGNTSIIIEE (433 aa)). Catalysis depends on for beta-ketoacyl synthase activity residues Cys-561, His-696, and His-740. The segment at 922-1227 (FAFTGQGTFY…QRDTDNWLTL (306 aa)) is malonyl-CoA:ACP transacylase (MAT) domain. The N-terminal hotdog fold stretch occupies residues 1307–1439 (HRLISEQYTD…VFYEDPSSWL (133 aa)). The region spanning 1307–1609 (HRLISEQYTD…FLQWPRVMLN (303 aa)) is the PKS/mFAS DH domain. Residues 1334 to 1588 (GVVDGHAMNG…FVGDVYVLQG (255 aa)) form a product template (PT) domain region. His-1339 acts as the Proton acceptor; for dehydratase activity in catalysis. The interval 1461–1609 (VTGKASKLTT…FLQWPRVMLN (149 aa)) is C-terminal hotdog fold. Asp-1522 serves as the catalytic Proton donor; for dehydratase activity. The disordered stretch occupies residues 1619–1690 (AKPAAKVPGK…MEELPSPPAG (72 aa)). A compositionally biased stretch (basic residues) spans 1635–1647 (PHFKPHHVSRHKP). In terms of domain architecture, Carrier spans 1689–1763 (AGMNDDMEKA…TIQDLKALLR (75 aa)). Position 1726 is an O-(pantetheine 4'-phosphoryl)serine (Ser-1726).

Non-reducing polyketide synthase that mediates the biosynthesis of alternariol (AOH), a micotoxin that seems not to be involved in virulence and oxidative stress tolerance. PKS19 alone is sufficient for AOH synthesis which is initiated by priming with acetyl-CoA, followed by sequential condensations of 6 malonyl-CoA units. The protein is Non-reducing polyketide synthase PKS19 of Phaeosphaeria nodorum (strain SN15 / ATCC MYA-4574 / FGSC 10173) (Glume blotch fungus).